Consider the following 502-residue polypeptide: Arabinose import ATP-binding protein AraG (502 aa).

2 ABC transporter domains span residues 6 to 241 and 252 to 497; these read LEFD…MVGR and REVG…MVES. 38-45 is an ATP binding site; the sequence is GENGAGKS.

This sequence belongs to the ABC transporter superfamily. Arabinose importer (TC 3.A.1.2.2) family. As to quaternary structure, the complex is composed of two ATP-binding proteins (AraG), two transmembrane proteins (AraH) and a solute-binding protein (AraF).

The protein localises to the cell inner membrane. It carries out the reaction L-arabinose(out) + ATP + H2O = L-arabinose(in) + ADP + phosphate + H(+). Part of the ABC transporter complex AraFGH involved in arabinose import. Responsible for energy coupling to the transport system. This Mannheimia succiniciproducens (strain KCTC 0769BP / MBEL55E) protein is Arabinose import ATP-binding protein AraG.